A 763-amino-acid polypeptide reads, in one-letter code: MLCESEARSTLADPVPMAYLSVDAQGSSEVSLDDITINSSAGTVEVCSMKPADDPKTERSQMNKTGLASSSRPASNVWTTQQDGEVKLRMDEEGMGSEAPKTVHEVFQEAVSKYGDYYALASKKNGQWVKLTYKMYYDKCWKAAKSFLKLVLERFHGVCILGFNSPEWFIADIGAIFAGGLAVGIYTTNSPEACHYVAENCSANILVVENHTQACRKSLEIEHKLPHMKAIIQYGEELKEKRPNQYSWREFLDLGEDIPDSQLREIIESQKPNQCCTLIYTSGTTGQPKGVMLSHDNLTWTSIAAGRSLMLLEATEKQELVVSYLPLSHVAAQMIDIWLPVTFGGQVFFAQPDALKGTLVDTLREVRPTAFLGVPRVWEKIEEKMKSVGAKSSTLRRKVASWAKGVGLQTNLKWMNGHSEVPMNFRLARQLVYKKVRKAIGLDRCTKCFTGAAPISRETLEFFLSLNIPVFELYGMSESSGPHTVSIPQAFRLTSCGKEMAGCRTLIHKPDADGIGEICFAGRHIFMGYLNMEEKTKEAIDKDGWLHSGDLGKCDKDGFIYITGRIKELIITAGGENVPPVPIEDAVKEACPIISNAMLVGDKAKFLAMLLTLKCIINTESGEPGDDLTAEAIEYCQKLGSKATKVSEIISSKDKAVYAAIQAAVSEVNKRAVSNAQKIQKWVVLEKDFSVGGGELGPTMKLKRPVVAQKYKDLIDEFYADANTPTTTEERTSAVMWGGRKLPLVHSIVSLGSLQQIQRVLQK.

The interval 47–78 is disordered; sequence CSMKPADDPKTERSQMNKTGLASSSRPASNVW. A compositionally biased stretch (basic and acidic residues) spans 51-61; that stretch reads PADDPKTERSQ. The segment covering 62 to 78 has biased composition (polar residues); that stretch reads MNKTGLASSSRPASNVW. ATP is bound by residues 281 to 289, 472 to 477, Asp550, Arg565, and Lys678; these read TSGTTGQPK and ELYGMS.

It belongs to the ATP-dependent AMP-binding enzyme family. Bubblegum subfamily.

It localises to the cytoplasm. It carries out the reaction a long-chain fatty acid + ATP + CoA = a long-chain fatty acyl-CoA + AMP + diphosphate. The catalysed reaction is (5Z,8Z,11Z,14Z)-eicosatetraenoate + ATP + CoA = (5Z,8Z,11Z,14Z)-eicosatetraenoyl-CoA + AMP + diphosphate. The enzyme catalyses hexadecanoate + ATP + CoA = hexadecanoyl-CoA + AMP + diphosphate. It catalyses the reaction (9Z)-octadecenoate + ATP + CoA = (9Z)-octadecenoyl-CoA + AMP + diphosphate. It carries out the reaction (9Z,12Z)-octadecadienoate + ATP + CoA = (9Z,12Z)-octadecadienoyl-CoA + AMP + diphosphate. The catalysed reaction is tetracosanoate + ATP + CoA = tetracosanoyl-CoA + AMP + diphosphate. In terms of biological role, mediates activation of long-chain fatty acids for both synthesis of cellular lipids, and degradation via beta-oxidation. Functionally, catalyzes the conversion of fatty acids such as long chain and very long-chain fatty acids to their active form acyl-CoAs for both synthesis of cellular lipids, and degradation via beta-oxidation. Can activate diverse saturated, monosaturated and polyunsaturated fatty acids. In Gallus gallus (Chicken), this protein is Long-chain-fatty-acid--CoA ligase ACSBG2.